Consider the following 419-residue polypeptide: Caspase-12 (419 aa).

One can recognise a CARD domain in the interval 1–92 (MAARRTHERD…QLSLQFSNDE (92 aa)). The residue at position 85 (Ser85) is a Phosphoserine. The tract at residues 88–113 (FSNDEDDGPQKICTPSSPSESKRKVE) is disordered. Residues His250 and Cys298 contribute to the active site.

Belongs to the peptidase C14A family. In terms of assembly, heterotetramer that consists of two anti-parallel arranged heterodimers, each one formed by two subunits (Potential). Interacts with TRAF2 under resting conditions; this interaction is reduced in ER stress conditions. As to expression, mainly expressed in skeletal muscle and lung.

Involved in the activation cascade of caspases responsible for apoptosis execution. The chain is Caspase-12 (Casp12) from Mus musculus (Mouse).